A 286-amino-acid chain; its full sequence is MNFKKVSNMPDEIICNFYVNISYLEISATYDSKNKRYSLSSKTGNFNVGVKGFEKLLSIFEKIGHVMKINEKTYKIIIQNKILNLKHLYSKKNKTHTLEILDEYNNLMKLSGKKLIDVALQLFKTFKINENIENSLNVKKTENDIQIINNNQNLKIEENINDSKTKENDNKCYREIIDRVLKSRSEQLFIENLENIPPKSVIYSITGAFSFIFGLGVLCETLESGKIRWKAIILGFIILILILAIVNYLMMKEKNVDEHEYNIPTKLMEDVYTTDCENFPCGYFPK.

2 helical membrane passes run 201–221 and 231–251; these read VIYSITGAFSFIFGLGVLCET and AIILGFIILILILAIVNYLMM.

It is found in the cell membrane. This is an uncharacterized protein from Methanocaldococcus jannaschii (strain ATCC 43067 / DSM 2661 / JAL-1 / JCM 10045 / NBRC 100440) (Methanococcus jannaschii).